Consider the following 203-residue polypeptide: Small ribosomal subunit protein uS3 (203 aa).

In terms of domain architecture, KH type-2 spans 39–113 (IREIIRRNFL…NHVLNAKNIA (75 aa)).

This sequence belongs to the universal ribosomal protein uS3 family. Part of the 30S ribosomal subunit. Forms a tight complex with proteins S10 and S14.

Functionally, binds the lower part of the 30S subunit head. Binds mRNA in the 70S ribosome, positioning it for translation. The sequence is that of Small ribosomal subunit protein uS3 from Carsonella ruddii.